The sequence spans 420 residues: Histidine--tRNA ligase (420 aa).

Belongs to the class-II aminoacyl-tRNA synthetase family. As to quaternary structure, homodimer.

It localises to the cytoplasm. The catalysed reaction is tRNA(His) + L-histidine + ATP = L-histidyl-tRNA(His) + AMP + diphosphate + H(+). In Streptomyces avermitilis (strain ATCC 31267 / DSM 46492 / JCM 5070 / NBRC 14893 / NCIMB 12804 / NRRL 8165 / MA-4680), this protein is Histidine--tRNA ligase.